We begin with the raw amino-acid sequence, 211 residues long: Outer-membrane lipoprotein carrier protein (211 aa).

The first 24 residues, 1–24 (MRNRIIVSACAALAMFAIQAPAHA), serve as a signal peptide directing secretion.

It belongs to the LolA family. As to quaternary structure, monomer.

It is found in the periplasm. In terms of biological role, participates in the translocation of lipoproteins from the inner membrane to the outer membrane. Only forms a complex with a lipoprotein if the residue after the N-terminal Cys is not an aspartate (The Asp acts as a targeting signal to indicate that the lipoprotein should stay in the inner membrane). The polypeptide is Outer-membrane lipoprotein carrier protein (Cupriavidus necator (strain ATCC 17699 / DSM 428 / KCTC 22496 / NCIMB 10442 / H16 / Stanier 337) (Ralstonia eutropha)).